We begin with the raw amino-acid sequence, 129 residues long: Protein Turandot A (129 aa).

A signal peptide spans 1–21 (MNSSTALMCFALLLISPLCMG). A glycan (N-linked (GlcNAc...) asparagine) is linked at asparagine 49.

This sequence belongs to the Turandot family. As to expression, expressed in the fat body (at protein level).

It is found in the secreted. A humoral factor that plays a role in stress tolerance; gives increased resistance to the lethal effects of bacterial challenge and stress. Regulated by the JAK/STAT pathway and NF-KB-like Relish pathway in the fat body, upd3 in the hemocytes and Mekk1 in response to septic injury and consequent immune response. This Drosophila melanogaster (Fruit fly) protein is Protein Turandot A.